Here is a 184-residue protein sequence, read N- to C-terminus: Photosystem I assembly protein Ycf4 (184 aa).

Transmembrane regions (helical) follow at residues 22 to 42 (FCWAIILFLGSLGFLLIGISS) and 57 to 77 (ILFFPQGIVMSFYGLAGLFIS).

This sequence belongs to the Ycf4 family.

It is found in the plastid. The protein resides in the chloroplast thylakoid membrane. Seems to be required for the assembly of the photosystem I complex. The chain is Photosystem I assembly protein Ycf4 from Populus trichocarpa (Western balsam poplar).